A 638-amino-acid chain; its full sequence is 1-deoxy-D-xylulose-5-phosphate synthase (638 aa).

Residues histidine 72 and 113–115 (GHA) each bind thiamine diphosphate. Aspartate 144 lines the Mg(2+) pocket. Thiamine diphosphate-binding positions include 145–146 (GA), asparagine 174, tyrosine 287, and glutamate 370. Residue asparagine 174 coordinates Mg(2+).

It belongs to the transketolase family. DXPS subfamily. In terms of assembly, homodimer. Mg(2+) is required as a cofactor. The cofactor is thiamine diphosphate.

The enzyme catalyses D-glyceraldehyde 3-phosphate + pyruvate + H(+) = 1-deoxy-D-xylulose 5-phosphate + CO2. The protein operates within metabolic intermediate biosynthesis; 1-deoxy-D-xylulose 5-phosphate biosynthesis; 1-deoxy-D-xylulose 5-phosphate from D-glyceraldehyde 3-phosphate and pyruvate: step 1/1. In terms of biological role, catalyzes the acyloin condensation reaction between C atoms 2 and 3 of pyruvate and glyceraldehyde 3-phosphate to yield 1-deoxy-D-xylulose-5-phosphate (DXP). This is 1-deoxy-D-xylulose-5-phosphate synthase from Thermosynechococcus vestitus (strain NIES-2133 / IAM M-273 / BP-1).